The chain runs to 494 residues: MPLSLYNTLTRHQEPFEPLEPGHVKMYCCGVTVYDYCHLGHARSYIVWDVVRRYLQWSGYQVRYVQNFTDIDDKILNRARQENSTMQAVSDRFIQAYHEDMQRLNILLADVYPKATDVIPEIIQLIQTLVDQGYAYAVDGDVYYAVDRFPDYGKLSGRQLEQMQAGASGRVDDTEPKKRHPLDFALWKAAKSEELSVYQPWDSPWGKGRPGWHIECSAMVRKELGHTIDIHCGGMDLIFPHHENEIAQSEAATRADLAHYWLHNGFVNIQGEKMSKSLGNFKTIRAFLNSGVDPMMLRLFVLQAHYRKPIDFSDETITAAQHSWQTLQEGLRFGYDYGQQLRWEDYQDSSFGDPACMRIPDSGAEIERFRAAMDDDLNTASAIAVLFELAKELRREGNLISHAGQPQLDPQELRSIWQTLVCLAQVLGLEVSPETEVTADDGLSEAEIEDLIQQRQAARKAKNYAEGDRIRNELKTKGITLIDQKDGSTKWIRD.

Cys29 serves as a coordination point for Zn(2+). Positions 31–41 (VTVYDYCHLGH) match the 'HIGH' region motif. 3 residues coordinate Zn(2+): Cys216, His241, and Glu245. The 'KMSKS' region signature appears at 273–277 (KMSKS). Residue Lys276 participates in ATP binding.

Belongs to the class-I aminoacyl-tRNA synthetase family. In terms of assembly, monomer. The cofactor is Zn(2+).

It localises to the cytoplasm. It carries out the reaction tRNA(Cys) + L-cysteine + ATP = L-cysteinyl-tRNA(Cys) + AMP + diphosphate. This Cyanothece sp. (strain PCC 7425 / ATCC 29141) protein is Cysteine--tRNA ligase.